The sequence spans 942 residues: UvrABC system protein A (942 aa).

Residue 32-39 (GLSGSGKS) coordinates ATP. The C4-type zinc-finger motif lies at 251 to 278 (CPVCGFTVPELEPRLFSFNAPFGSCPTC). 2 ABC transporter domains span residues 308–589 (WNPI…KKSI) and 609–937 (GNGR…HYLK). Residue 641–648 (GVSGSGKS) participates in ATP binding. The C4-type zinc-finger motif lies at 740–766 (CEACSGDGIIKIEMHFLPDVYVPCEVC).

This sequence belongs to the ABC transporter superfamily. UvrA family. Forms a heterotetramer with UvrB during the search for lesions.

Its subcellular location is the cytoplasm. The UvrABC repair system catalyzes the recognition and processing of DNA lesions. UvrA is an ATPase and a DNA-binding protein. A damage recognition complex composed of 2 UvrA and 2 UvrB subunits scans DNA for abnormalities. When the presence of a lesion has been verified by UvrB, the UvrA molecules dissociate. This is UvrABC system protein A from Streptococcus pyogenes serotype M3 (strain ATCC BAA-595 / MGAS315).